We begin with the raw amino-acid sequence, 490 residues long: Limb region 1 protein homolog (490 aa).

Over methionine 1 to arginine 19 the chain is Extracellular. A helical transmembrane segment spans residues glutamate 20–threonine 40. Residues arginine 41–phenylalanine 62 are Cytoplasmic-facing. A helical transmembrane segment spans residues leucine 63–isoleucine 83. The Extracellular segment spans residues serine 84 to asparagine 110. Residues leucine 111–leucine 131 form a helical membrane-spanning segment. Topologically, residues glutamate 132 to leucine 151 are cytoplasmic. The chain crosses the membrane as a helical span at residues valine 152–isoleucine 172. The Extracellular portion of the chain corresponds to aspartate 173 to glutamate 187. A helical membrane pass occupies residues phenylalanine 188–cysteine 208. Residues threonine 209–asparagine 291 are Cytoplasmic-facing. Positions arginine 250 to alanine 287 form a coiled coil. A helical transmembrane segment spans residues leucine 292–valine 312. Over alanine 313–serine 339 the chain is Extracellular. The helical transmembrane segment at leucine 340 to valine 360 threads the bilayer. The Cytoplasmic segment spans residues serine 361–threonine 383. Residues methionine 384 to methionine 404 form a helical membrane-spanning segment. Residues serine 405–glycine 426 are Extracellular-facing. Residues asparagine 427 to valine 447 form a helical membrane-spanning segment. Topologically, residues arginine 448–leucine 490 are cytoplasmic.

This sequence belongs to the LIMR family. As to expression, widely expressed with strongest expression in heart and pancreas.

Its subcellular location is the membrane. Putative membrane receptor. The polypeptide is Limb region 1 protein homolog (LMBR1) (Homo sapiens (Human)).